A 183-amino-acid chain; its full sequence is Archaemetzincin (183 aa).

H131 is a Zn(2+) binding site. E132 (proton acceptor) is an active-site residue. Positions 135, 141, 142, 147, 166, and 169 each coordinate Zn(2+).

This sequence belongs to the peptidase M54 family. As to quaternary structure, monomer. It depends on Zn(2+) as a cofactor.

Probable zinc metalloprotease whose natural substrate is unknown. The protein is Archaemetzincin of Saccharolobus islandicus (strain L.S.2.15 / Lassen #1) (Sulfolobus islandicus).